Reading from the N-terminus, the 178-residue chain is Hypoxanthine phosphoribosyltransferase (178 aa).

The diphosphate site is built by arginine 43 and glycine 44. Glutamate 99 lines the GMP pocket. An IMP-binding site is contributed by glutamate 99. Mg(2+)-binding residues include glutamate 99 and aspartate 100. Catalysis depends on aspartate 103, which acts as the Proton acceptor. GMP is bound by residues 103–108, lysine 131, and aspartate 159; that span reads DSGNTL. Residues 103-108 and lysine 131 each bind IMP; that span reads DSGNTL. A diphosphate-binding site is contributed by arginine 165.

This sequence belongs to the purine/pyrimidine phosphoribosyltransferase family. In terms of assembly, homotetramer. Mg(2+) serves as cofactor.

The protein resides in the cytoplasm. The catalysed reaction is IMP + diphosphate = hypoxanthine + 5-phospho-alpha-D-ribose 1-diphosphate. It carries out the reaction GMP + diphosphate = guanine + 5-phospho-alpha-D-ribose 1-diphosphate. Its pathway is purine metabolism; IMP biosynthesis via salvage pathway; IMP from hypoxanthine: step 1/1. Functionally, purine salvage pathway enzyme which catalyzes the transfer of the ribosyl-5-phosphate group from 5-phospho-alpha-D-ribose 1-diphosphate (PRPP) to the N9 position of hypoxanthine to yield IMP (inosine 5'-monophosphate). To a lesser extent, can also act on guanine leading to GMP, but shows a highly less efficient activity with xanthine. This chain is Hypoxanthine phosphoribosyltransferase (hpt), found in Salmonella typhimurium (strain LT2 / SGSC1412 / ATCC 700720).